The primary structure comprises 623 residues: MCGIVGYIGQAGDSRDYFALDVVVEGLRRLEYRGYDSAGIAIHANGEISYRKKAGKVAALDAEIAKAPLPDSILGIGHTRWATHGGPTDVNAHPHVVSNGKLAVVHNGIIENFAELRSELSAKGYNFVSDTDTEVAASLLAEIYNTQANGDLTLAMQLTGQRLEGAFTLLAIHADHDDRIVAARRNSPLVIGVGEGENFLGSDVSGFIDYTRKAVELANDQVVTITADDYAITNFDGSEAVGKPFDVEWDAAAAEKGGFGSFMEKEIHDQPAAVRDTLMGRLDEDGKLVLDELRIDEAILRSVDKIVIVACGTAAYAGQVARYAIEHWCRIPTEVELAHEFRYRDPILNEKTLVVALSQSGETMDTLMAVRHAREQGAKVVAICNTVGSTLPREADASLYTYAGPEIAVASTKAFLAQITASYLLGLYLAQLRGNKFADEVSSILDSLREMPEKIQQVIDAEEQIKKLGQDMADAKSVLFLGRHVGFPVALEGALKLKEIAYLHAEGFAAGELKHGPIALVEEGQPIFVIVPSPRGRDSLHSKVVSNIQEIRARGAVTIVIAEEGDEAVNDYANFIIRIPQAPTLMQPLLSTVPLQIFACAVATAKGYNVDQPRNLAKSVTVE.

Cys2 acts as the Nucleophile; for GATase activity in catalysis. The Glutamine amidotransferase type-2 domain maps to 2-228; it reads CGIVGYIGQA…NDQVVTITAD (227 aa). SIS domains follow at residues 295 to 435 and 468 to 613; these read IDEA…LRGN and LGQD…VDQP. The active-site For Fru-6P isomerization activity is the Lys618.

As to quaternary structure, homodimer.

It is found in the cytoplasm. The enzyme catalyses D-fructose 6-phosphate + L-glutamine = D-glucosamine 6-phosphate + L-glutamate. Functionally, catalyzes the first step in hexosamine metabolism, converting fructose-6P into glucosamine-6P using glutamine as a nitrogen source. This chain is Glutamine--fructose-6-phosphate aminotransferase [isomerizing], found in Corynebacterium glutamicum (strain ATCC 13032 / DSM 20300 / JCM 1318 / BCRC 11384 / CCUG 27702 / LMG 3730 / NBRC 12168 / NCIMB 10025 / NRRL B-2784 / 534).